A 123-amino-acid polypeptide reads, in one-letter code: uncharacterized protein (123 aa).

An N-terminal signal peptide occupies residues 1-24 (MLPLCLTFLSFFLSLGGSFKAVMT). The next 2 helical transmembrane spans lie at 39 to 59 (FWIFNWTVTLIPLNSLVALAI) and 101 to 121 (FGGILTIDLSFYWALGVALTG).

The protein resides in the membrane. This is an uncharacterized protein from Saccharomyces cerevisiae (strain ATCC 204508 / S288c) (Baker's yeast).